Reading from the N-terminus, the 68-residue chain is Glu S.griseus protease inhibitor (68 aa).

Residue serine 1 is modified to N-acetylserine. A disulfide bridge connects residues cysteine 3 and cysteine 48.

It belongs to the protease inhibitor I13 (potato type I serine protease inhibitor) family.

Its function is as follows. Competitively inhibits Glu S.griseus protease by forming probably a 1:1 complex. BGIA has no inhibitory activity against 2 other acidic amino acid-specific endopeptidases (S.aureus protease V8 and B.subtilis proteinase), chymotrypsin, trypsin, pancreatic elastase, and papain, although subtilisin Carlsberg was strongly inhibited. The sequence is that of Glu S.griseus protease inhibitor from Momordica charantia (Bitter gourd).